The following is a 178-amino-acid chain: Adenine phosphoribosyltransferase (178 aa).

This sequence belongs to the purine/pyrimidine phosphoribosyltransferase family. In terms of assembly, homodimer.

Its subcellular location is the cytoplasm. It carries out the reaction AMP + diphosphate = 5-phospho-alpha-D-ribose 1-diphosphate + adenine. Its pathway is purine metabolism; AMP biosynthesis via salvage pathway; AMP from adenine: step 1/1. In terms of biological role, catalyzes a salvage reaction resulting in the formation of AMP, that is energically less costly than de novo synthesis. This Cereibacter sphaeroides (strain ATCC 17025 / ATH 2.4.3) (Rhodobacter sphaeroides) protein is Adenine phosphoribosyltransferase.